We begin with the raw amino-acid sequence, 1600 residues long: E3 ubiquitin-protein ligase listerin (1600 aa).

11 HEAT repeats span residues 31–65 (SSVP…CVKK), 114–150 (KTLP…DSDQ), 161–202 (GKLL…SSMA), 245–288 (YQLV…DLLR), 291–344 (ISVT…PDYA), 526–606 (RNYK…AALS), 853–904 (YTTN…DIRT), 962–986 (YASK…GAKF), 1045–1083 (LYNV…WVQT), 1289–1324 (VDVR…KADN), and 1325–1369 (SLNA…EEGT). The segment at 1537-1583 (CPICYAVVSADKKLPDKRCSTCNNLFHRLCLYKWFQNSNKNTCPLCR) adopts an RING-type; degenerate zinc-finger fold.

The protein belongs to the LTN1 family. In terms of assembly, component of the ribosome quality control complex (RQC), composed of the E3 ubiquitin ligase RKR1/LTN1, RQC1 and RQC2, as well as CDC48 and its ubiquitin-binding cofactors associated with the 60S ribosomal subunits.

It localises to the nucleus. Its subcellular location is the cytoplasm. The protein localises to the cytosol. It catalyses the reaction S-ubiquitinyl-[E2 ubiquitin-conjugating enzyme]-L-cysteine + [acceptor protein]-L-lysine = [E2 ubiquitin-conjugating enzyme]-L-cysteine + N(6)-ubiquitinyl-[acceptor protein]-L-lysine.. It participates in protein modification; protein ubiquitination. In terms of biological role, E3 ubiquitin-protein ligase component of the ribosome quality control complex (RQC), a ribosome-associated complex that mediates ubiquitination and extraction of incompletely synthesized nascent chains for proteasomal degradation. Mediates ubiquitination of proteins derived from mRNAs lacking stop codons (non-stop proteins) and other translation arrest products induced by poly-lysine sequences and tandem rare codons. Ubiquitination leads to CDC48 recruitment for extraction and degradation of the incomplete translation product. May indirectly play a role in chromatin function and transcription. This chain is E3 ubiquitin-protein ligase listerin (rkr-1), found in Neurospora crassa (strain ATCC 24698 / 74-OR23-1A / CBS 708.71 / DSM 1257 / FGSC 987).